We begin with the raw amino-acid sequence, 201 residues long: MTAQASNIVWHKASVDRESIEKERGHKSVIIWFTGLSGSGKSTLANALNVALFKKGLATYVLDGDNIRHGLCNDLGFSDSDREENIRRIGEVAKLFLDAGVIVLTAFVSPFRSDREKARKLVKENDFLEIYCAANLDICETRDTKGLYAKARAGEIKDFTGISSPYEEPENPDLKIDTGLKDIDQCVEEVISKLIELNLVK.

An ATP-binding site is contributed by 35-42 (GLSGSGKS). Serine 109 serves as the catalytic Phosphoserine intermediate.

This sequence belongs to the APS kinase family.

The catalysed reaction is adenosine 5'-phosphosulfate + ATP = 3'-phosphoadenylyl sulfate + ADP + H(+). It participates in sulfur metabolism; hydrogen sulfide biosynthesis; sulfite from sulfate: step 2/3. Functionally, catalyzes the synthesis of activated sulfate. This Prochlorococcus marinus (strain SARG / CCMP1375 / SS120) protein is Adenylyl-sulfate kinase.